A 606-amino-acid chain; its full sequence is Membrane protein insertase YidC (606 aa).

A helical transmembrane segment spans residues 8–28; that stretch reads LILATALSFIVILVWFVLFPP. Positions 33–59 are disordered; sequence MPLTGETSTELTPDAATGSLPSVTSDT. 6 helical membrane passes run 116-136, 348-368, 374-394, 448-468, 506-526, and 542-562; these read IVTM…YGWA, FIDS…FFLL, FIGN…AILL, LPIL…FVTI, SIMA…SMWL, and IFAW…SGLV.

This sequence belongs to the OXA1/ALB3/YidC family. Type 1 subfamily. In terms of assembly, interacts with the Sec translocase complex via SecD. Specifically interacts with transmembrane segments of nascent integral membrane proteins during membrane integration.

It is found in the cell inner membrane. In terms of biological role, required for the insertion and/or proper folding and/or complex formation of integral membrane proteins into the membrane. Involved in integration of membrane proteins that insert both dependently and independently of the Sec translocase complex, as well as at least some lipoproteins. Aids folding of multispanning membrane proteins. This is Membrane protein insertase YidC from Roseobacter denitrificans (strain ATCC 33942 / OCh 114) (Erythrobacter sp. (strain OCh 114)).